Here is a 1389-residue protein sequence, read N- to C-terminus: DNA-directed RNA polymerase subunit beta'' (1389 aa).

Zn(2+) contacts are provided by Cys-224, Cys-295, Cys-302, and Cys-305.

This sequence belongs to the RNA polymerase beta' chain family. RpoC2 subfamily. As to quaternary structure, in plastids the minimal PEP RNA polymerase catalytic core is composed of four subunits: alpha, beta, beta', and beta''. When a (nuclear-encoded) sigma factor is associated with the core the holoenzyme is formed, which can initiate transcription. Zn(2+) is required as a cofactor.

It localises to the plastid. Its subcellular location is the chloroplast. The catalysed reaction is RNA(n) + a ribonucleoside 5'-triphosphate = RNA(n+1) + diphosphate. Functionally, DNA-dependent RNA polymerase catalyzes the transcription of DNA into RNA using the four ribonucleoside triphosphates as substrates. The polypeptide is DNA-directed RNA polymerase subunit beta'' (Atropa belladonna (Belladonna)).